A 352-amino-acid polypeptide reads, in one-letter code: F-box/kelch-repeat protein SKIP30 (352 aa).

The 47-residue stretch at 9 to 55 (SGLLDGIPEAVALRCLAHVPLHLHPNLELVSRSWRAAIRSHELFRVR) folds into the F-box domain. 5 Kelch repeats span residues 57–109 (ELRS…TTAG), 110–167 (MLFV…VLQG), 168–215 (KIVV…LVVN), 243–293 (YGWP…MTSL), and 296–351 (EVLI…TQLT).

In terms of assembly, part of a SCF (ASK-cullin-F-box) protein ligase complex. Interacts with SKP1A/ASK1.

It participates in protein modification; protein ubiquitination. In terms of biological role, component of SCF(ASK-cullin-F-box) E3 ubiquitin ligase complexes, which may mediate the ubiquitination and subsequent proteasomal degradation of target proteins. This is F-box/kelch-repeat protein SKIP30 (SKIP30) from Arabidopsis thaliana (Mouse-ear cress).